Consider the following 727-residue polypeptide: 1,4-alpha-glucan branching enzyme GlgB (727 aa).

The Nucleophile role is filled by D405. E458 (proton donor) is an active-site residue.

This sequence belongs to the glycosyl hydrolase 13 family. GlgB subfamily. As to quaternary structure, monomer.

It carries out the reaction Transfers a segment of a (1-&gt;4)-alpha-D-glucan chain to a primary hydroxy group in a similar glucan chain.. It participates in glycan biosynthesis; glycogen biosynthesis. Its function is as follows. Catalyzes the formation of the alpha-1,6-glucosidic linkages in glycogen by scission of a 1,4-alpha-linked oligosaccharide from growing alpha-1,4-glucan chains and the subsequent attachment of the oligosaccharide to the alpha-1,6 position. The polypeptide is 1,4-alpha-glucan branching enzyme GlgB (Yersinia pseudotuberculosis serotype O:1b (strain IP 31758)).